A 509-amino-acid chain; its full sequence is Lysine--tRNA ligase (509 aa).

Polar residues predominate over residues 1 to 18 (MSEQNPTQAAKQAPQQEL). A disordered region spans residues 1 to 20 (MSEQNPTQAAKQAPQQELND). Residues Glu-418 and Glu-425 each coordinate Mg(2+).

Belongs to the class-II aminoacyl-tRNA synthetase family. As to quaternary structure, homodimer. The cofactor is Mg(2+).

Its subcellular location is the cytoplasm. It catalyses the reaction tRNA(Lys) + L-lysine + ATP = L-lysyl-tRNA(Lys) + AMP + diphosphate. This chain is Lysine--tRNA ligase, found in Psychromonas ingrahamii (strain DSM 17664 / CCUG 51855 / 37).